A 354-amino-acid chain; its full sequence is Uroporphyrinogen decarboxylase (354 aa).

Residues 27–31 (RQAGR), Asp77, Tyr154, Thr209, and His327 contribute to the substrate site.

It belongs to the uroporphyrinogen decarboxylase family. As to quaternary structure, homodimer.

Its subcellular location is the cytoplasm. The enzyme catalyses uroporphyrinogen III + 4 H(+) = coproporphyrinogen III + 4 CO2. It functions in the pathway porphyrin-containing compound metabolism; protoporphyrin-IX biosynthesis; coproporphyrinogen-III from 5-aminolevulinate: step 4/4. Functionally, catalyzes the decarboxylation of four acetate groups of uroporphyrinogen-III to yield coproporphyrinogen-III. This chain is Uroporphyrinogen decarboxylase, found in Escherichia coli (strain 55989 / EAEC).